The chain runs to 560 residues: Poly(3-hydroxyalkanoate) polymerase 2 (560 aa).

Cysteine 296 is a catalytic residue.

Belongs to the PHA/PHB synthase family. Type II PhaC subfamily.

The protein operates within biopolymer metabolism; poly-(R)-3-hydroxybutanoate biosynthesis. Its function is as follows. Synthesizes poly(3-hydroxyalkanoates) (PHA), complements a mutant of P.putida that does not make PHA. The polypeptide is Poly(3-hydroxyalkanoate) polymerase 2 (Ectopseudomonas oleovorans (Pseudomonas oleovorans)).